The primary structure comprises 200 residues: MSQSNQPDSPVTQTQAEEAVRTLLRWAGEDPTREGLLDTPRRVAEAYGDWFSGYRDEPREYLERTFEEVAGYDELIVLRDISYESHCEHHMAPIIGKVHVGYLPRGKVVGISKLARVVESYARRFQVQEKMTAQIAQCIQDVLQPLGVGVVVEGAHECMTTRGIHKRGVSMVTSKMLGSFREDARTRAEFLQFIEVGGKR.

3 residues coordinate Zn(2+): cysteine 87, histidine 90, and cysteine 158.

It belongs to the GTP cyclohydrolase I family. Toroid-shaped homodecamer, composed of two pentamers of five dimers.

The enzyme catalyses GTP + H2O = 7,8-dihydroneopterin 3'-triphosphate + formate + H(+). It participates in cofactor biosynthesis; 7,8-dihydroneopterin triphosphate biosynthesis; 7,8-dihydroneopterin triphosphate from GTP: step 1/1. This is GTP cyclohydrolase 1 from Xanthomonas axonopodis pv. citri (strain 306).